The following is a 430-amino-acid chain: Adenylosuccinate synthetase (430 aa).

Residues 12-18 (GDEGKGK) and 40-42 (GHT) contribute to the GTP site. The Proton acceptor role is filled by aspartate 13. The Mg(2+) site is built by aspartate 13 and glycine 40. Residues 13 to 16 (DEGK), 38 to 41 (NAGH), threonine 128, arginine 142, glutamine 223, threonine 238, and arginine 302 contribute to the IMP site. The Proton donor role is filled by histidine 41. Residue 298–304 (VNTGRKR) participates in substrate binding. Residues arginine 304, 330-332 (KLD), and 412-414 (GVG) each bind GTP.

It belongs to the adenylosuccinate synthetase family. Homodimer. Mg(2+) is required as a cofactor.

The protein resides in the cytoplasm. The enzyme catalyses IMP + L-aspartate + GTP = N(6)-(1,2-dicarboxyethyl)-AMP + GDP + phosphate + 2 H(+). It functions in the pathway purine metabolism; AMP biosynthesis via de novo pathway; AMP from IMP: step 1/2. Its function is as follows. Plays an important role in the de novo pathway of purine nucleotide biosynthesis. Catalyzes the first committed step in the biosynthesis of AMP from IMP. This is Adenylosuccinate synthetase from Corynebacterium aurimucosum (strain ATCC 700975 / DSM 44827 / CIP 107346 / CN-1) (Corynebacterium nigricans).